The chain runs to 260 residues: MLSITRRLMGTDVRSRLLLSSLNGDMPGALLLLRQQQQASMDVELLHTVLARATALAHVETIAYVWYHHVQPRRLAVEGRLLCDMAGVALHQDKLFLPAQFLQHHQTMGLGRGTSASASAEAQAVEFELRRVKVEAFARGTMHSTALSEKWKVFLQEMDTLPGQPPLRLRDFPQLARAVGVAAQLQQPQEQAAALALFGRQPLVVKNEWSLPLLLSAVLWHVPGPAQARRVLAEFRQCYRGLPLTDAEVVIKRRGFEIDT.

The transit peptide at 1–8 (MLSITRRL) directs the protein to the mitochondrion.

The protein localises to the mitochondrion inner membrane. Functionally, required for expression of the mitochondrial gene for cytochrome c oxidase subunit 3 (COX3). PET122 seems to work by directly interacting with the small ribosomal subunit to promote translation initiation on the COX3 mRNA. The polypeptide is Protein PET122, mitochondrial (PET122) (Saccharomyces bayanus (Yeast)).